The sequence spans 210 residues: 3-hexulose-6-phosphate synthase 3 (210 aa).

It belongs to the HPS/KGPDC family. HPS subfamily.

The enzyme catalyses D-ribulose 5-phosphate + formaldehyde = D-arabino-hex-3-ulose 6-phosphate. It participates in one-carbon metabolism; formaldehyde assimilation via RuMP pathway; D-fructose 6-phosphate from D-ribulose 5-phosphate and formaldehyde: step 1/2. Functionally, catalyzes the condensation of ribulose 5-phosphate with formaldehyde to form 3-hexulose 6-phosphate. The chain is 3-hexulose-6-phosphate synthase 3 from Staphylococcus saprophyticus subsp. saprophyticus (strain ATCC 15305 / DSM 20229 / NCIMB 8711 / NCTC 7292 / S-41).